Here is a 136-residue protein sequence, read N- to C-terminus: ATP synthase epsilon chain (136 aa).

Belongs to the ATPase epsilon chain family. As to quaternary structure, F-type ATPases have 2 components, CF(1) - the catalytic core - and CF(0) - the membrane proton channel. CF(1) has five subunits: alpha(3), beta(3), gamma(1), delta(1), epsilon(1). CF(0) has three main subunits: a, b and c.

The protein resides in the cellular thylakoid membrane. In terms of biological role, produces ATP from ADP in the presence of a proton gradient across the membrane. The chain is ATP synthase epsilon chain (atpC) from Prochloron didemni.